We begin with the raw amino-acid sequence, 316 residues long: MLLSSIAQHLKLPFFGEDLELDSMNELALSLPSQLTFAINKKYSQELESSKSKAFLIIDTLVENLPKESSYIICPDVSISMAQATKLFNKRPIEPQLPSATIGEGSMIDSMVRVENGTCIGSNVIVMAGAYIGANCVIGDDTTIYPNVTIYRDTIIGKECIIHAGVVIGADGFGFSHTKEGEHIKIYQNGNVIIEDCVEIGANCAIDRAVFNSTIIRRGTKLDNFIHIAHNCDIGEHSIFVAQTGVGGSTKLGRNCVVSGQSAFSDHLNIAPFSTFSARSGVTKSIEKSGGVYSGFPLMNHKEWKRLQVKIARLND.

His-230 (proton acceptor) is an active-site residue.

This sequence belongs to the transferase hexapeptide repeat family. LpxD subfamily. As to quaternary structure, homotrimer.

It catalyses the reaction a UDP-3-O-[(3R)-3-hydroxyacyl]-alpha-D-glucosamine + a (3R)-hydroxyacyl-[ACP] = a UDP-2-N,3-O-bis[(3R)-3-hydroxyacyl]-alpha-D-glucosamine + holo-[ACP] + H(+). The protein operates within bacterial outer membrane biogenesis; LPS lipid A biosynthesis. In terms of biological role, catalyzes the N-acylation of UDP-3-O-acylglucosamine using 3-hydroxyacyl-ACP as the acyl donor. Is involved in the biosynthesis of lipid A, a phosphorylated glycolipid that anchors the lipopolysaccharide to the outer membrane of the cell. This Sulfurimonas denitrificans (strain ATCC 33889 / DSM 1251) (Thiomicrospira denitrificans (strain ATCC 33889 / DSM 1251)) protein is UDP-3-O-acylglucosamine N-acyltransferase 2.